The following is a 232-amino-acid chain: tRNA (guanine-N(7)-)-methyltransferase (232 aa).

S-adenosyl-L-methionine contacts are provided by glutamate 38, aspartate 63, glutamate 90, and aspartate 113. The active site involves aspartate 113. Substrate contacts are provided by lysine 117 and aspartate 149.

It belongs to the class I-like SAM-binding methyltransferase superfamily. TrmB family.

The enzyme catalyses guanosine(46) in tRNA + S-adenosyl-L-methionine = N(7)-methylguanosine(46) in tRNA + S-adenosyl-L-homocysteine. The protein operates within tRNA modification; N(7)-methylguanine-tRNA biosynthesis. In terms of biological role, catalyzes the formation of N(7)-methylguanine at position 46 (m7G46) in tRNA. This Syntrophotalea carbinolica (strain DSM 2380 / NBRC 103641 / GraBd1) (Pelobacter carbinolicus) protein is tRNA (guanine-N(7)-)-methyltransferase.